The primary structure comprises 467 residues: Mitogen-activated protein kinase kinase kinase 8 (467 aa).

T80 carries the phosphothreonine modification. S138 and S141 each carry phosphoserine. Residues 144-152 (VPRGAFGKV) and K167 contribute to the ATP site. One can recognise a Protein kinase domain in the interval 146 to 388 (RGAFGKVYLA…AADLLKHEAL (243 aa)). D253 serves as the catalytic Proton acceptor. T290 bears the Phosphothreonine mark. S400 and S443 each carry phosphoserine.

Belongs to the protein kinase superfamily. STE Ser/Thr protein kinase family. MAP kinase kinase kinase subfamily. Forms a ternary complex with NFKB1/p105 and TNIP2. Interacts with NFKB1; the interaction increases the stability of MAP3K8 but inhibits its MEK phosphorylation activity, whereas loss of interaction following LPS stimulation leads to its degradation. Interacts with CD40 and TRAF6; the interaction is required for ERK activation. Interacts with KSR2; the interaction inhibits ERK and NF-kappa-B activation. Requires Mg(2+) as cofactor. Post-translationally, autophosphorylated. In terms of tissue distribution, expressed in spleen, thymus, liver and lung.

The protein resides in the cytoplasm. It catalyses the reaction L-seryl-[protein] + ATP = O-phospho-L-seryl-[protein] + ADP + H(+). The enzyme catalyses L-threonyl-[protein] + ATP = O-phospho-L-threonyl-[protein] + ADP + H(+). In terms of biological role, required for lipopolysaccharide (LPS)-induced, TLR4-mediated activation of the MAPK/ERK pathway in macrophages, thus being critical for production of the pro-inflammatory cytokine TNF-alpha (TNF) during immune responses. Involved in the regulation of T-helper cell differentiation and IFNG expression in T-cells. Involved in mediating host resistance to bacterial infection through negative regulation of type I interferon (IFN) production. Transduces CD40 and TNFRSF1A signals that activate ERK in B-cells and macrophages, and thus may play a role in the regulation of immunoglobulin production. May also play a role in the transduction of TNF signals that activate JNK and NF-kappa-B in some cell types. In adipocytes, activates MAPK/ERK pathway in an IKBKB-dependent manner in response to IL1B and TNF, but not insulin, leading to induction of lipolysis. Plays a role in the cell cycle. This Rattus norvegicus (Rat) protein is Mitogen-activated protein kinase kinase kinase 8 (Map3k8).